The following is a 500-amino-acid chain: Cryptochrome DASH (500 aa).

Residues 4–138 (KTVLVWYRND…PVRSFWGTTL (135 aa)) enclose the Photolyase/cryptochrome alpha/beta domain.

Belongs to the DNA photolyase class-1 family. The cofactor is FAD. Requires (6R)-5,10-methylene-5,6,7,8-tetrahydrofolate as cofactor.

In terms of biological role, may have a photoreceptor function. Binds DNA; probably functions as a transcriptional repressor. The chain is Cryptochrome DASH (cry) from Gloeobacter violaceus (strain ATCC 29082 / PCC 7421).